A 983-amino-acid chain; its full sequence is UPF0746 protein DDB_G0280809 (983 aa).

Positions 1–21 (MISNKRKEIDTINEHHEKNND) are enriched in basic and acidic residues. Residues 1 to 26 (MISNKRKEIDTINEHHEKNNDDSDGI) form a disordered region. The SAP domain occupies 42–76 (SGSTNYRELQIIAKSLGLASNGKKQLVYNRIEGYF). Residues 391-413 (HTTPTSTSTSTSTSTSTYTSTST) are disordered. Residues 392 to 413 (TTPTSTSTSTSTSTSTYTSTST) show a composition bias toward low complexity.

This sequence belongs to the UPF0746 family.

The chain is UPF0746 protein DDB_G0280809 from Dictyostelium discoideum (Social amoeba).